We begin with the raw amino-acid sequence, 431 residues long: Levansucrase LscC (431 aa).

Residues W61, D62, A148, R218, and D219 each contribute to the sucrose site. D62 functions as the Nucleophile in the catalytic mechanism. E303 serves as the catalytic Proton donor/acceptor.

The protein belongs to the glycosyl hydrolase 68 family.

The protein resides in the periplasm. The enzyme catalyses [6)-beta-D-fructofuranosyl-(2-&gt;](n) alpha-D-glucopyranoside + sucrose = [6)-beta-D-fructofuranosyl-(2-&gt;](n+1) alpha-D-glucopyranoside + D-glucose. Catalyzes the synthesis of levan, a fructose polymer, by transferring the fructosyl moiety from sucrose to a growing acceptor molecule. This Pseudomonas savastanoi pv. glycinea (Pseudomonas syringae pv. glycinea) protein is Levansucrase LscC.